The following is a 314-amino-acid chain: Porphobilinogen deaminase (314 aa).

Cys-234 carries the post-translational modification S-(dipyrrolylmethanemethyl)cysteine.

This sequence belongs to the HMBS family. Monomer. Dipyrromethane is required as a cofactor.

It carries out the reaction 4 porphobilinogen + H2O = hydroxymethylbilane + 4 NH4(+). Its pathway is porphyrin-containing compound metabolism; protoporphyrin-IX biosynthesis; coproporphyrinogen-III from 5-aminolevulinate: step 2/4. Functionally, tetrapolymerization of the monopyrrole PBG into the hydroxymethylbilane pre-uroporphyrinogen in several discrete steps. The sequence is that of Porphobilinogen deaminase from Mycobacterium ulcerans (strain Agy99).